The primary structure comprises 444 residues: COP9 signalosome complex subunit 2 (444 aa).

The tract at residues 1–31 is disordered; sequence MSDNDDDFMCDDDEDYGLEYSEDSNSEPDVD. The 163-residue stretch at 255 to 417 folds into the PCI domain; sequence AHTDFFEAFK…QVLQLDKINS (163 aa).

Belongs to the CSN2 family. As to quaternary structure, component of the CSN complex, probably composed of CSN1b, alien/CSN2, CSN3, CSN4, CSN5, CSN6, CSN7 and CSN8. Interacts with Rpn6. Expressed during embryonic stages 11-14 in the muscle attachment sites (apodemes); pharynx attachment to the roof of the mouth and in the epidermis of the head for the dorsal and ventral prothoracic pharyngeal muscle attachment. From stage 16 onwards expression is seen in all thoracic and abdominal apodemes.

It localises to the cytoplasm. The protein resides in the nucleus. Component of the COP9 signalosome complex (CSN), a complex involved in various cellular and developmental processes. The CSN complex is an essential regulator of the ubiquitin (Ubl) conjugation pathway by mediating the deneddylation of the cullin subunits of the SCF-type E3 ligase complexes, leading to decrease the Ubl ligase activity of SCF. The CSN complex plays an essential role in oogenesis and embryogenesis and is required for proper photoreceptor R cell differentiation and promote lamina glial cell migration or axon targeting. It also promotes Ubl-dependent degradation of cyclin E (CycE) during early oogenesis. This Drosophila melanogaster (Fruit fly) protein is COP9 signalosome complex subunit 2.